The following is a 188-amino-acid chain: Inosine triphosphate pyrophosphatase (188 aa).

12–17 (TGNKNK) is a binding site for ITP. Glu40 is a binding site for Mg(2+). ITP contacts are provided by residues Lys52, 68–69 (DT), Lys85, 144–147 (FGWD), Lys165, and 170–171 (HR).

It belongs to the HAM1 NTPase family. Homodimer. It depends on Mg(2+) as a cofactor. The cofactor is Mn(2+).

The protein localises to the cytoplasm. It localises to the nucleus. It carries out the reaction ITP + H2O = IMP + diphosphate + H(+). It catalyses the reaction dITP + H2O = dIMP + diphosphate + H(+). The enzyme catalyses XTP + H2O = XMP + diphosphate + H(+). Its function is as follows. Pyrophosphatase that hydrolyzes non-canonical purine nucleotides such as inosine triphosphate (ITP), deoxyinosine triphosphate (dITP) or xanthosine 5'-triphosphate (XTP) to their respective monophosphate derivatives. The enzyme does not distinguish between the deoxy- and ribose forms. Probably excludes non-canonical purines from RNA and DNA precursor pools, thus preventing their incorporation into RNA and DNA and avoiding chromosomal lesions. In Phaeosphaeria nodorum (strain SN15 / ATCC MYA-4574 / FGSC 10173) (Glume blotch fungus), this protein is Inosine triphosphate pyrophosphatase.